The chain runs to 204 residues: NAD(P)H dehydrogenase (quinone) FQR1 (204 aa).

The 188-residue stretch at 5-192 (VYIVYYSMYG…QQAFHQGQYI (188 aa)) folds into the Flavodoxin-like domain. Residues 11-15 (SMYGH), 112-165 (IFYS…SPYG), and His-136 contribute to the FMN site. Position 13 (Tyr-13) interacts with NAD(+).

The protein belongs to the WrbA family. Requires FMN as cofactor.

Its subcellular location is the cell membrane. It carries out the reaction a quinone + NADH + H(+) = a quinol + NAD(+). The catalysed reaction is a quinone + NADPH + H(+) = a quinol + NADP(+). In terms of biological role, catalyzes the transfer of electrons from NADH and NADPH to several quinones in vitro. May act as detoxification enzyme, and protect against auxin-induced oxidative stress. This is NAD(P)H dehydrogenase (quinone) FQR1 from Arabidopsis thaliana (Mouse-ear cress).